The sequence spans 397 residues: Major outer membrane porin, serovar L3 (397 aa).

The first 22 residues, 1 to 22, serve as a signal peptide directing secretion; that stretch reads MKKLLKSVLVFAALSSASSLQA.

The protein belongs to the chlamydial porin (CP) (TC 1.B.2) family. Part of a disulfide cross-linked outer membrane complex (COMC) composed of the major outer membrane porin (MOMP), the small cysteine-rich protein (OmcA) and the large cysteine-rich periplasmic protein (OmcB).

The protein localises to the cell outer membrane. Functionally, in elementary bodies (EBs, the infectious stage, which is able to survive outside the host cell) provides the structural integrity of the outer envelope through disulfide cross-links with the small cysteine-rich protein and the large cysteine-rich periplasmic protein. It has been described in publications as the Sarkosyl-insoluble COMC (Chlamydia outer membrane complex), and serves as the functional equivalent of peptidoglycan. Its function is as follows. Permits diffusion of specific solutes through the outer membrane. The polypeptide is Major outer membrane porin, serovar L3 (ompA) (Chlamydia trachomatis).